A 275-amino-acid chain; its full sequence is Gap junction gamma-3 protein (275 aa).

The Cytoplasmic segment spans residues 1 to 22 (MCGSFLRRVAAEESRHPTPVGR). Residues 23–43 (LLLPALLGLRLVLLAAGGTGV) form a helical membrane-spanning segment. The Extracellular portion of the chain corresponds to 44–77 (FGGGEEQSEFVCHTQQAGCKAVCYDAFHPLSPLR). The helical transmembrane segment at 78 to 98 (FWAFQVTLVAVPSALYMGFIL) threads the bilayer. Residues 99-134 (YHVIWHWEASEKVKTEEETLSQGEKGGEASRAGSSR) lie on the Cytoplasmic side of the membrane. The chain crosses the membrane as a helical span at residues 135–155 (LLWAYVAQLGVRLALEGAALG). Residues 156-196 (GQYHLYGFRMPSSFVCRLEPCLGSTNCYLSRPSEKSIFLKT) lie on the Extracellular side of the membrane. A helical transmembrane segment spans residues 197–217 (MFGVTGLCLLFTLLELVLLGL). The Cytoplasmic portion of the chain corresponds to 218 to 275 (GRWWRIWRHKSPSSNYSPTSQSAKRCKAPTDNFPVVEIRERPGEAGERGSEVPLSARP). Basic and acidic residues predominate over residues 254–267 (EIRERPGEAGERGS). Residues 254–275 (EIRERPGEAGERGSEVPLSARP) are disordered.

The protein belongs to the connexin family. Gamma-type subfamily. As to quaternary structure, a connexon is composed of a hexamer of connexins.

It localises to the cell membrane. It is found in the cell junction. The protein resides in the gap junction. In terms of biological role, one gap junction consists of a cluster of closely packed pairs of transmembrane channels, the connexons, through which materials of low MW diffuse from one cell to a neighboring cell. In Bos taurus (Bovine), this protein is Gap junction gamma-3 protein (GJC3).